A 507-amino-acid chain; its full sequence is WD-40 repeat-containing protein MSI4 (507 aa).

At Met-1 the chain carries N-acetylmethionine. The interval 1–66 (MESDEAAAVS…KTQQSPSVDE (66 aa)) is disordered. 3 WD repeats span residues 95–137 (RWGP…KPRV), 162–202 (IHPG…NRHA), and 217–257 (GHQD…TTIG). Positions 258–272 (TDSKSSGSIIKQTGE) are enriched in polar residues. Residues 258–282 (TDSKSSGSIIKQTGEGTDKNESPTV) form a disordered region. WD repeat units follow at residues 290-330 (GHED…NPVT), 335-375 (AHDA…ANGV), 384-424 (GHKA…KKSD), and 439-486 (GHRD…YRPE). The DWD box signature appears at 308–323 (FCSVGDDSCLILWDAR).

Belongs to the WD repeat RBAP46/RBAP48/MSI1 family. As to quaternary structure, interacts with AHL16 and HOS1. Interacts with LHP1, PDP1, PDP2 and PDP3. Component of the PRC2 (polycomb repressive complex 2) complex which regulates histone methylation on histone H3K27. As to expression, expressed in rosette leaves, cauline leaves, main stems and developing fruits. Expressed at higher levels in roots and flowers.

It localises to the nucleus. In terms of biological role, core histone-binding subunit that may target chromatin assembly factors, chromatin remodeling factors and histone deacetylases to their histone substrates in a manner that is regulated by nucleosomal DNA. Component of the flowering autonomous pathway which positively regulates flowering by promoting transcriptional repression of the flowering repressor FLC. May promote histone deacetylation at the FLC locus leading to the formation of repressive chromatin structures. Forms a histone deacetylase complex with HDA5, HDA6 and FLD that represses FLC gene expression to control flowering time. Also negatively regulates cold-responsive genes. Acts together with PDP1 and MSI5 to regulate the function of the PRC2 complex on FLC. Required for systemic acquired resistance (SAR) toward pathogenic bacteria (e.g. Pseudomonas syringae pv tomato DC3000 (avrPto)). Together with FLD and MSI4/FVE, contributes to dehydroabietinal-dependent (DA, a diterpenoid tricyclic diterpene) activation of flowering ans SAR. This chain is WD-40 repeat-containing protein MSI4, found in Arabidopsis thaliana (Mouse-ear cress).